Consider the following 427-residue polypeptide: Trigger factor (427 aa).

One can recognise a PPIase FKBP-type domain in the interval 163 to 248; it reads GDTVVIDFVG…IHEVKAKEVP (86 aa).

Belongs to the FKBP-type PPIase family. Tig subfamily.

The protein localises to the cytoplasm. It carries out the reaction [protein]-peptidylproline (omega=180) = [protein]-peptidylproline (omega=0). Its function is as follows. Involved in protein export. Acts as a chaperone by maintaining the newly synthesized protein in an open conformation. Functions as a peptidyl-prolyl cis-trans isomerase. The sequence is that of Trigger factor from Streptococcus pneumoniae (strain 70585).